A 527-amino-acid polypeptide reads, in one-letter code: Putative WEB family protein At4g17210 (527 aa).

2 disordered regions span residues 1–28 (MAKI…IDTR) and 46–70 (FSKK…TDVS). Residues 55–68 (SSSSSSQSQDTTTD) are compositionally biased toward low complexity. Coiled-coil stretches lie at residues 95–159 (AAKA…YILI), 202–389 (SNKI…AKHM), and 436–513 (KKIR…EAHS).

This sequence belongs to the WEB family.

This chain is Putative WEB family protein At4g17210, found in Arabidopsis thaliana (Mouse-ear cress).